A 268-amino-acid chain; its full sequence is Tryptophan synthase alpha chain (268 aa).

Residues Glu40 and Asp51 each act as proton acceptor in the active site.

It belongs to the TrpA family. As to quaternary structure, tetramer of two alpha and two beta chains.

The catalysed reaction is (1S,2R)-1-C-(indol-3-yl)glycerol 3-phosphate + L-serine = D-glyceraldehyde 3-phosphate + L-tryptophan + H2O. The protein operates within amino-acid biosynthesis; L-tryptophan biosynthesis; L-tryptophan from chorismate: step 5/5. Functionally, the alpha subunit is responsible for the aldol cleavage of indoleglycerol phosphate to indole and glyceraldehyde 3-phosphate. This is Tryptophan synthase alpha chain from Geobacillus thermodenitrificans (strain NG80-2).